The chain runs to 585 residues: Bifunctional purine biosynthesis protein ade10 (585 aa).

The MGS-like domain maps to 1 to 142 (MYALLSVYDK…KNHARVTILS (142 aa)). IMP contacts are provided by residues 30 to 33 (SGGT), 60 to 63 (RVKT), 97 to 98 (CN), and 121 to 122 (DI). The active-site Proton donor/acceptor; for FAICAR cyclization activity is the Lys133. 5-amino-1-(5-phospho-beta-D-ribosyl)imidazole-4-carboxamide contacts are provided by residues 200 to 201 (RY), His260, Gly308, Asp331, Asn423, and Arg443. Catalysis depends on His260, which acts as the Proton acceptor; for AICAR formyltransferase activity. Ile444 is a (6R)-10-formyltetrahydrofolate binding site. A 5-amino-1-(5-phospho-beta-D-ribosyl)imidazole-4-carboxamide-binding site is contributed by Phe534. (6R)-10-formyltetrahydrofolate-binding positions include Asp539 and 558–559 (SV). Arg581 provides a ligand contact to 5-amino-1-(5-phospho-beta-D-ribosyl)imidazole-4-carboxamide.

The protein belongs to the PurH family. Homodimer.

It localises to the cytoplasm. It is found in the cytosol. The catalysed reaction is (6R)-10-formyltetrahydrofolate + 5-amino-1-(5-phospho-beta-D-ribosyl)imidazole-4-carboxamide = 5-formamido-1-(5-phospho-D-ribosyl)imidazole-4-carboxamide + (6S)-5,6,7,8-tetrahydrofolate. It catalyses the reaction IMP + H2O = 5-formamido-1-(5-phospho-D-ribosyl)imidazole-4-carboxamide. Its pathway is purine metabolism; IMP biosynthesis via de novo pathway; 5-formamido-1-(5-phospho-D-ribosyl)imidazole-4-carboxamide from 5-amino-1-(5-phospho-D-ribosyl)imidazole-4-carboxamide (10-formyl THF route): step 1/1. The protein operates within purine metabolism; IMP biosynthesis via de novo pathway; IMP from 5-formamido-1-(5-phospho-D-ribosyl)imidazole-4-carboxamide: step 1/1. Functionally, bifunctional enzyme that catalyzes the last two steps of purine biosynthesis. Acts as a transformylase that incorporates a formyl group to the AMP analog AICAR (5-amino-1-(5-phospho-beta-D-ribosyl)imidazole-4-carboxamide) to produce the intermediate formyl-AICAR (FAICAR). Also catalyzes the cyclization of FAICAR to IMP. The chain is Bifunctional purine biosynthesis protein ade10 (ade10) from Schizosaccharomyces pombe (strain 972 / ATCC 24843) (Fission yeast).